A 339-amino-acid chain; its full sequence is tRNA-splicing endonuclease (339 aa).

Catalysis depends on residues Y274, H285, and K316.

This sequence belongs to the tRNA-intron endonuclease family. Archaeal long subfamily. Homodimer. The cofactor is Ca(2+). Mg(2+) is required as a cofactor. The N-terminus is blocked.

It carries out the reaction pretRNA = a 3'-half-tRNA molecule with a 5'-OH end + a 5'-half-tRNA molecule with a 2',3'-cyclic phosphate end + an intron with a 2',3'-cyclic phosphate and a 5'-hydroxyl terminus.. In terms of biological role, endonuclease that removes tRNA introns. Cleaves pre-tRNA at the 5'- and 3'-splice sites to release the intron. The products are an intron and two tRNA half-molecules bearing 2',3' cyclic phosphate and 5'-OH termini. Recognizes a pseudosymmetric substrate in which 2 bulged loops of 3 bases are separated by a stem of 4 bp. The chain is tRNA-splicing endonuclease from Haloferax volcanii (strain ATCC 29605 / DSM 3757 / JCM 8879 / NBRC 14742 / NCIMB 2012 / VKM B-1768 / DS2) (Halobacterium volcanii).